Reading from the N-terminus, the 614-residue chain is Leucine-rich repeat protein soc-2 homolog (614 aa).

2 disordered regions span residues Met1–Pro29 and Asn44–Thr79. 20 LRR repeats span residues Gly134 to Cys155, His157 to Leu178, Asn180 to Cys201, Gln203 to Leu224, Ser226 to Leu247, Asn249 to Leu270, Asn272 to Cys293, Asn295 to Leu316, Ser318 to Lys340, Ser341 to Ser362, Ala365 to Gln386, Asn389 to Arg410, Gly413 to Trp434, Asn436 to Leu457, Asn459 to Leu480, Lys482 to Leu503, Glu505 to Leu526, Asn528 to Leu549, Ser551 to Cys573, and Asn575 to Gly596.

It belongs to the SHOC2 family.

In terms of biological role, acts as a Ras effector and participates in MAPK pathway activation. Probably acts as a regulatory subunit of protein phosphatase that specifically dephosphorylates Raf kinase and stimulate Raf activity at specialized signaling complexes upon Ras activation. This chain is Leucine-rich repeat protein soc-2 homolog (Sur-8), found in Drosophila virilis (Fruit fly).